Consider the following 256-residue polypeptide: 5-keto-4-deoxy-D-glucarate aldolase (256 aa).

Residue His50 is the Proton acceptor of the active site. Residue Gln151 coordinates substrate. Glu153 lines the Mg(2+) pocket. 2 residues coordinate substrate: Ser178 and Asp179. Asp179 contributes to the Mg(2+) binding site.

It belongs to the HpcH/HpaI aldolase family. KDGluc aldolase subfamily. Homohexamer; trimer of dimers. Requires Mg(2+) as cofactor.

It carries out the reaction 5-dehydro-4-deoxy-D-glucarate = 2-hydroxy-3-oxopropanoate + pyruvate. The catalysed reaction is 2-dehydro-3-deoxy-D-glucarate = 2-hydroxy-3-oxopropanoate + pyruvate. Its pathway is carbohydrate acid metabolism; galactarate degradation; D-glycerate from galactarate: step 2/3. Catalyzes the reversible retro-aldol cleavage of both 5-keto-4-deoxy-D-glucarate and 2-keto-3-deoxy-D-glucarate to pyruvate and tartronic semialdehyde. This is 5-keto-4-deoxy-D-glucarate aldolase from Escherichia coli O157:H7 (strain EC4115 / EHEC).